A 310-amino-acid polypeptide reads, in one-letter code: Olfactory receptor 2A7 (310 aa).

Residues 1–24 (MGDNITSITEFLLLGFPVGPRIQM) are Extracellular-facing. Asn4 is a glycosylation site (N-linked (GlcNAc...) asparagine). Residues 25 to 48 (LLFGLFSLFYVFTLLGNGTILGLI) traverse the membrane as a helical segment. Residues 49–56 (SLDSRLHA) lie on the Cytoplasmic side of the membrane. A helical membrane pass occupies residues 57-78 (PMYFFLSHLAVVDIAYACNTVP). Over 79-99 (RMLVNLLHPAKPISFAGRMMQ) the chain is Extracellular. Residues 100 to 119 (TFLFSTFAVTECLLLVVMSY) traverse the membrane as a helical segment. Residues 120-138 (DLYVAICHPLRYLAIMTWR) lie on the Cytoplasmic side of the membrane. The chain crosses the membrane as a helical span at residues 139-157 (VCITLAVTSWTTGVLLSLI). Residues 158–194 (HLVLLLPLPFCRPQKIYHFFCEILAVLKLACADTHIN) lie on the Extracellular side of the membrane. A helical membrane pass occupies residues 195–218 (ENMVLAGAISGLVGPLSTIVVSYM). Residues 219 to 235 (CILCAILQIQSREVQRK) are Cytoplasmic-facing. A helical transmembrane segment spans residues 236–258 (AFCTCFSHLCVIGLFYGTAIIMY). At 259–271 (VGPRYGNPKEQKK) the chain is on the extracellular side. The helical transmembrane segment at 272-291 (YLLLFHSLFNPMLNPLICSL) threads the bilayer. The Cytoplasmic portion of the chain corresponds to 292–310 (RNSEVKNTLKRVLGVERAL).

The protein belongs to the G-protein coupled receptor 1 family.

It is found in the cell membrane. In terms of biological role, odorant receptor. The sequence is that of Olfactory receptor 2A7 (OR2A7) from Homo sapiens (Human).